Here is a 364-residue protein sequence, read N- to C-terminus: Envelope glycoprotein US27 (364 aa).

Topologically, residues 1-36 (MTTSTTTTTNIMLQVSNVTNHTLNSTEIYQLFEYTR) are virion surface. N17, N20, and N24 each carry an N-linked (GlcNAc...) asparagine; by host glycan. A helical membrane pass occupies residues 37–57 (FGVWLMCIVGTFLNMLVITTI). Residues 58–69 (LYYRRKKKSPSD) are Intravirion-facing. The chain crosses the membrane as a helical span at residues 70–90 (TYICNLAVADLLIVVGLPFFL). Residues 91 to 103 (EYAKHHPKLSREV) are Virion surface-facing. Residues 104–124 (VCSGLNACFYICLFAGVCFLI) traverse the membrane as a helical segment. At 125–150 (NLSMDRYCVIVWGVELNRVRNNKRAT) the chain is on the intravirion side. Residues 151–171 (CWVVIFWILAALMGMPHYLMY) form a helical membrane-spanning segment. Residues 172-188 (SHTNNECVGEFANETSG) are Virion surface-facing. The helical transmembrane segment at 189–209 (WFPVFLNTKVNICGYLAPIVL) threads the bilayer. At 210–234 (MAYTYNRMVRFIINYVGKWHMQTLH) the chain is on the intravirion side. The chain crosses the membrane as a helical span at residues 235–255 (VLLVVVVSFASFWFPFNLALF). Residues 256–279 (LESIRLLSGTQNETLQTVITFCLY) are Virion surface-facing. A helical membrane pass occupies residues 280–300 (VGQFLAYVRACLNPGIYILVG). The Intravirion portion of the chain corresponds to 301–364 (TQMRKDMWTT…MESGEEEFLL (64 aa)). Residues 344–364 (KRTHYDRKHAPMESGEEEFLL) are disordered.

This sequence belongs to the G-protein coupled receptor 1 family. In terms of assembly, heterodimerizes with US28.

The protein localises to the virion. The protein resides in the host cell membrane. Its function is as follows. Plays an important role in spread of HCMV via the extracellular route. As a G-protein-coupled receptor (vGPCR), may activate signaling pathways important for virion assembly or egress processes. This chain is Envelope glycoprotein US27 (US27), found in Homo sapiens (Human).